A 551-amino-acid chain; its full sequence is Protein MTL1 (551 aa).

An N-terminal signal peptide occupies residues 1 to 35; sequence MASCNPTRKKSSASSLSMWRTILMALTTLPLSVLS. The Extracellular portion of the chain corresponds to 36-361; sequence QELVPANSTT…HSGLSKKNRN (326 aa). Disordered regions lie at residues 108–143, 206–227, and 243–263; these read MQVS…IISS, PSSS…SYSS, and SSSS…SSSS. Residues 362 to 382 traverse the membrane as a helical segment; sequence IIIGCVVGIGAPLILILLILI. Residues 383–551 lie on the Cytoplasmic side of the membrane; the sequence is YMFCVQPKKT…PNNGLNITNY (169 aa). Positions 429–513 are disordered; the sequence is SSDSPIGSNN…SNSNSQDYND (85 aa). Residues 430-441 are compositionally biased toward polar residues; that stretch reads SDSPIGSNNIQN. The span at 466 to 477 shows a compositional bias: acidic residues; it reads GYDDDDDDDAND. A phosphoserine mark is found at serine 481 and serine 482. A compositionally biased stretch (low complexity) spans 498-508; the sequence is SASYSMSNSNS.

The protein belongs to the MID2 like cell wall stress sensor family.

Its subcellular location is the membrane. Functionally, involved in cell integrity signaling during vegetative growth at elevated temperature. Acts positively on the PKC1-MAPK pathway. Cell membrane sensor of oxidative stress in the cell integrity pathway upstream of PKC1. Required to transmit the oxidative signal to SLT2 and to restore the correct actin organization following oxidative stress. Multicopy suppressor of 1,3-beta-glucan synthase (GS) mutation. Also suppresses RGD1 null mutations. This chain is Protein MTL1 (MTL1), found in Saccharomyces cerevisiae (strain ATCC 204508 / S288c) (Baker's yeast).